Reading from the N-terminus, the 116-residue chain is Large ribosomal subunit protein bL17 (116 aa).

It belongs to the bacterial ribosomal protein bL17 family. Part of the 50S ribosomal subunit. Contacts protein L32.

The chain is Large ribosomal subunit protein bL17 from Dictyoglomus thermophilum (strain ATCC 35947 / DSM 3960 / H-6-12).